A 291-amino-acid chain; its full sequence is Bifunctional protein FolD (291 aa).

Residues 166–168 (GAG), Ile191, and Ile232 each bind NADP(+).

It belongs to the tetrahydrofolate dehydrogenase/cyclohydrolase family. Homodimer.

The enzyme catalyses (6R)-5,10-methylene-5,6,7,8-tetrahydrofolate + NADP(+) = (6R)-5,10-methenyltetrahydrofolate + NADPH. It carries out the reaction (6R)-5,10-methenyltetrahydrofolate + H2O = (6R)-10-formyltetrahydrofolate + H(+). The protein operates within one-carbon metabolism; tetrahydrofolate interconversion. Catalyzes the oxidation of 5,10-methylenetetrahydrofolate to 5,10-methenyltetrahydrofolate and then the hydrolysis of 5,10-methenyltetrahydrofolate to 10-formyltetrahydrofolate. The chain is Bifunctional protein FolD from Aquifex aeolicus (strain VF5).